A 553-amino-acid polypeptide reads, in one-letter code: Membrane protein insertase YidC (553 aa).

A helical transmembrane segment spans residues 3-23; that stretch reads IKRTILWVIFSLSVVLLFDNW. The disordered stretch occupies residues 44-64; sequence AAAPGGTPAGDVPKAAAPAAA. The next 4 helical transmembrane spans lie at 359 to 379, 429 to 449, 467 to 487, and 507 to 527; these read LLGNWGWSIVALTVLVKLVFF, LGGCLPIVIQIPVFIALYWVL, LASPDPFYILPILMAVSMFVQ, and PIAFSVMFFFFPAGLVLYWVV.

This sequence belongs to the OXA1/ALB3/YidC family. Type 1 subfamily. Interacts with the Sec translocase complex via SecD. Specifically interacts with transmembrane segments of nascent integral membrane proteins during membrane integration.

The protein resides in the cell inner membrane. Its function is as follows. Required for the insertion and/or proper folding and/or complex formation of integral membrane proteins into the membrane. Involved in integration of membrane proteins that insert both dependently and independently of the Sec translocase complex, as well as at least some lipoproteins. Aids folding of multispanning membrane proteins. The chain is Membrane protein insertase YidC from Ralstonia nicotianae (strain ATCC BAA-1114 / GMI1000) (Ralstonia solanacearum).